The sequence spans 202 residues: Recombination protein RecR (202 aa).

A C4-type zinc finger spans residues 59 to 74; the sequence is CSVCFHLSAEPVCEIC. Residues 82-176 enclose the Toprim domain; that stretch reads HTICVVADSR…KVTRIAFGLP (95 aa).

This sequence belongs to the RecR family.

Its function is as follows. May play a role in DNA repair. It seems to be involved in an RecBC-independent recombinational process of DNA repair. It may act with RecF and RecO. The chain is Recombination protein RecR from Thermosynechococcus vestitus (strain NIES-2133 / IAM M-273 / BP-1).